The primary structure comprises 281 residues: MDGDNKTYTIYILSDSTGETAATMIRAALVQYTTKDVNIIRCKNVRTDTQAEAVIEECFERRGMLAYTVASQGLRAKIREMASGKGIPYFDLLGPLLSTLDTFFGQHSEDTVGALRAVDERYFKRIEAIEYTVKHDDGKTFAELDKADIVLVGISRTSKTPLSIFLSHKGWKVANVPLVLDTPLPEELFKIDQRRIVGLIIDMDSLQRIRKSRLEKFGQDPGGSYASMSHIAKEIEYAEKIFKVNRRWPVFNVTERALEETASEIVRIIAARLGLPDSVIF.

153–160 (GISRTSKT) is an ADP binding site.

Belongs to the pyruvate, phosphate/water dikinase regulatory protein family. PDRP subfamily.

The catalysed reaction is N(tele)-phospho-L-histidyl/L-threonyl-[pyruvate, phosphate dikinase] + ADP = N(tele)-phospho-L-histidyl/O-phospho-L-threonyl-[pyruvate, phosphate dikinase] + AMP + H(+). The enzyme catalyses N(tele)-phospho-L-histidyl/O-phospho-L-threonyl-[pyruvate, phosphate dikinase] + phosphate + H(+) = N(tele)-phospho-L-histidyl/L-threonyl-[pyruvate, phosphate dikinase] + diphosphate. In terms of biological role, bifunctional serine/threonine kinase and phosphorylase involved in the regulation of the pyruvate, phosphate dikinase (PPDK) by catalyzing its phosphorylation/dephosphorylation. In Bdellovibrio bacteriovorus (strain ATCC 15356 / DSM 50701 / NCIMB 9529 / HD100), this protein is Putative pyruvate, phosphate dikinase regulatory protein.